Reading from the N-terminus, the 528-residue chain is Purine-cytosine permease FCY21 (528 aa).

At 1–90 (MPQTHEMSLN…DDSILNAASM (90 aa)) the chain is on the cytoplasmic side. Serine 43 bears the Phosphoserine mark. A Phosphothreonine modification is found at threonine 46. Residues 91–111 (WFSANMVLPAYAIGALGPMVF) form a helical membrane-spanning segment. Residues 112–118 (DLNFGQS) lie on the Extracellular side of the membrane. A helical transmembrane segment spans residues 119–139 (VFVIIFFNLLGLVSVAFFSVF). Residues 140–161 (GAELGLRQMILSRYLVGNIAAR) are Cytoplasmic-facing. The chain crosses the membrane as a helical span at residues 162 to 182 (IFSFINFIACIGWGIVNTVAS). Residues 183 to 198 (SQVLNMVNPGHQCPLW) lie on the Extracellular side of the membrane. A helical membrane pass occupies residues 199–219 (AGCIVIIGATVIVTFFGYGVI). Residues 220–221 (HA) are Cytoplasmic-facing. The helical transmembrane segment at 222–242 (YEKWAWVPNFAVFLVIIARLA) threads the bilayer. Residues 243–260 (RSKKFVLGEWTSGPTTAG) lie on the Extracellular side of the membrane. Residues 261–281 (NVLSFGSTVYGFAAGWTTYAA) traverse the membrane as a helical segment. Residues 282–295 (DYTVYMPRKTNKYK) lie on the Cytoplasmic side of the membrane. Residues 296–316 (IFFSLVVGLATPLYFTMILGA) form a helical membrane-spanning segment. Residues 317 to 340 (AVAMAAIGDPAWKTYYDENSIGGL) are Extracellular-facing. The chain crosses the membrane as a helical span at residues 341–361 (TFAVLVPNSVHGFGQFCCVLL). The Cytoplasmic portion of the chain corresponds to 362–393 (SLSTIANNVPNMYTIALSVQATWEPLAKVPRV). Residues 394–414 (IWTLLGNAAALGIAIPACYYF) form a helical membrane-spanning segment. Residues 415–416 (ST) lie on the Extracellular side of the membrane. A helical transmembrane segment spans residues 417–437 (FMNYFMDSIGYYLAIYIAIAC). Residues 438 to 460 (SEHFIYRRSFSAYNVDDWDSWER) lie on the Cytoplasmic side of the membrane. Residues 461 to 481 (LPIGIAGTAALIVGAFGVALG) traverse the membrane as a helical segment. At 482–493 (MCQTYWVGEISR) the chain is on the extracellular side. A helical transmembrane segment spans residues 494 to 514 (LIGDYGGDIGFELGLSWAFIV). Residues 515 to 528 (YNIARPFELKYFGR) are Cytoplasmic-facing.

This sequence belongs to the purine-cytosine permease (2.A.39) family.

It localises to the membrane. Functionally, probable purine-cytosine permease. The polypeptide is Purine-cytosine permease FCY21 (FCY21) (Saccharomyces cerevisiae (strain ATCC 204508 / S288c) (Baker's yeast)).